The primary structure comprises 131 residues: Small ribosomal subunit protein uS11 (131 aa).

The protein belongs to the universal ribosomal protein uS11 family. Part of the 30S ribosomal subunit. Interacts with proteins S7 and S18. Binds to IF-3.

Located on the platform of the 30S subunit, it bridges several disparate RNA helices of the 16S rRNA. Forms part of the Shine-Dalgarno cleft in the 70S ribosome. This Geobacter sulfurreducens (strain ATCC 51573 / DSM 12127 / PCA) protein is Small ribosomal subunit protein uS11.